Reading from the N-terminus, the 349-residue chain is tRNA pseudouridine synthase D (349 aa).

Substrate is bound at residue Phe-27. The Nucleophile role is filled by Asp-80. Position 129 (Asn-129) interacts with substrate. Positions 155 to 303 (GVPNYFGAQR…VEASRRAMLL (149 aa)) constitute a TRUD domain. Residue Phe-329 coordinates substrate.

This sequence belongs to the pseudouridine synthase TruD family.

It carries out the reaction uridine(13) in tRNA = pseudouridine(13) in tRNA. In terms of biological role, responsible for synthesis of pseudouridine from uracil-13 in transfer RNAs. This is tRNA pseudouridine synthase D from Salmonella dublin (strain CT_02021853).